The primary structure comprises 321 residues: MTSIMTNPAAMAALQTLRAINHNLETTQGRISSGYRVETAADNAAYWSIATTMRSDNAALSTVHDALGLGAAKVDTFYSAMDTVIDVMTEIKAKLVAASEPGVDKDKINKEVAELKSQLNSAAQSASFSGENWLYNGASAALGTKSIVASFNRSADGSVTVSTLNYDTAKSVLIDVTDPARGMLTKAVNADALQSTPTGTARNYYLIDAGAAPAGATEIEIDNATTGAQLGDMISVVDELISQLTDSAATLGAITSRIEMQESFVANLMDVIDKGVGRLVDADMNEESTRLKALQTQQQLGIQSLSIANTTSENILRLFQE.

This sequence belongs to the bacterial flagellin family.

The protein resides in the secreted. It is found in the bacterial flagellum. Flagellin is the subunit protein which polymerizes to form the filaments of bacterial flagella. This is Flagellin C (flaC) from Rhizobium meliloti (strain 1021) (Ensifer meliloti).